Consider the following 285-residue polypeptide: Large ribosomal subunit protein uL2 (285 aa).

The disordered stretch occupies residues 215–285; that stretch reads GRSRHKGIRP…IIRNRKGEQY (71 aa). Residues 256–272 show a composition bias toward basic residues; that stretch reads WGKRHMGVKTRNMKKHS.

It belongs to the universal ribosomal protein uL2 family. Part of the 50S ribosomal subunit. Forms a bridge to the 30S subunit in the 70S ribosome.

In terms of biological role, one of the primary rRNA binding proteins. Required for association of the 30S and 50S subunits to form the 70S ribosome, for tRNA binding and peptide bond formation. It has been suggested to have peptidyltransferase activity; this is somewhat controversial. Makes several contacts with the 16S rRNA in the 70S ribosome. The protein is Large ribosomal subunit protein uL2 of Mycoplasma genitalium (strain ATCC 33530 / DSM 19775 / NCTC 10195 / G37) (Mycoplasmoides genitalium).